Reading from the N-terminus, the 363-residue chain is Phospho-N-acetylmuramoyl-pentapeptide-transferase (363 aa).

The next 10 membrane-spanning stretches (helical) occupy residues threonine 3–isoleucine 23, valine 55–leucine 75, proline 76–leucine 96, leucine 116–alanine 136, leucine 158–threonine 178, glycine 190–cysteine 210, leucine 237–serine 257, isoleucine 261–leucine 281, isoleucine 286–valine 306, and phenylalanine 340–valine 360.

It belongs to the glycosyltransferase 4 family. MraY subfamily. It depends on Mg(2+) as a cofactor.

The protein localises to the cell membrane. It carries out the reaction UDP-N-acetyl-alpha-D-muramoyl-L-alanyl-gamma-D-glutamyl-meso-2,6-diaminopimeloyl-D-alanyl-D-alanine + di-trans,octa-cis-undecaprenyl phosphate = di-trans,octa-cis-undecaprenyl diphospho-N-acetyl-alpha-D-muramoyl-L-alanyl-D-glutamyl-meso-2,6-diaminopimeloyl-D-alanyl-D-alanine + UMP. Its pathway is cell wall biogenesis; peptidoglycan biosynthesis. Functionally, catalyzes the initial step of the lipid cycle reactions in the biosynthesis of the cell wall peptidoglycan: transfers peptidoglycan precursor phospho-MurNAc-pentapeptide from UDP-MurNAc-pentapeptide onto the lipid carrier undecaprenyl phosphate, yielding undecaprenyl-pyrophosphoryl-MurNAc-pentapeptide, known as lipid I. This is Phospho-N-acetylmuramoyl-pentapeptide-transferase from Kineococcus radiotolerans (strain ATCC BAA-149 / DSM 14245 / SRS30216).